Consider the following 205-residue polypeptide: Protein Nef (205 aa).

A lipid anchor (N-myristoyl glycine; by host) is attached at Gly2. Position 6 is a phosphoserine; by host (Ser6). Residues 62-65 (DNEE) form an acidic; interacts with host PACS1 and PACS2; stabilizes the interaction of NEF/MHC-I with host AP1M1; necessary for MHC-I internalization region. The SH3-binding; interaction with Src family tyrosine kinases stretch occupies residues 69-78 (PVRPQVPTRP). A PxxP; stabilizes the interaction of NEF/MHC-I with host AP1M1; necessary for MHC-I internalization motif is present at residues 72–75 (PQVP). A mediates dimerization, Nef-PTE1 interaction region spans residues 108–124 (EILDLWVYHTQGFFPDW). Positions 148-180 (LTEEQVEQANEGDNNCLLHPICQHGMEDEDKEV) are binding to ATP6V1H. The Dileucine internalization motif; necessary for CD4 internalization signature appears at 164 to 165 (LL). Positions 174 to 175 (ED) match the Diacidic; necessary for CD4 internalization motif.

This sequence belongs to the lentivirus primate group Nef protein family. As to quaternary structure, monomer; cytosolic form. Homodimer; membrane bound form. Interacts with Nef associated p21-activated kinase (PAK2); this interaction activates PAK2. Associates with the Nef-MHC-I-AP1 complex; this complex is required for MHC-I internalization. Interacts (via C-terminus) with host PI3-kinase. Interacts with host PACS1; this interaction seems to be weak. Interacts with host PACS2. Interacts with host LCK and MAPK3; these interactions inhibit the kinase activity of the latter. Interacts with host ATP6V1H; this interaction may play a role in CD4 endocytosis. Associates with the CD4-Nef-AP2 complex; this complex is required for CD4 internalization. Interacts with host AP2 subunit alpha and AP2 subunit sigma2. Interacts with TCR-zeta chain; this interaction up-regulates the Fas ligand (FasL) surface expression. Interacts with host HCK, LYN, and SRC; these interactions activate the Src family kinases. Interacts with MAP3K5; this interaction inhibits the Fas and TNFR-mediated death signals. Interacts with beta-COP and PTE1. Interacts with human RACK1; this increases Nef phosphorylation by PKC. Interacts with TP53; this interaction decreases the half-life of TP53, protecting the infected cell against p53-mediated apoptosis. The virion-associated Nef proteins are cleaved by the viral protease to release the soluble C-terminal core protein. Nef is probably cleaved concomitantly with viral structural proteins on maturation of virus particles. In terms of processing, myristoylated. Post-translationally, phosphorylated on serine residues, probably by host PKCdelta and theta.

The protein localises to the host cell membrane. Its subcellular location is the virion. It localises to the secreted. It is found in the host Golgi apparatus membrane. In terms of biological role, factor of infectivity and pathogenicity, required for optimal virus replication. Alters numerous pathways of T-lymphocyte function and down-regulates immunity surface molecules in order to evade host defense and increase viral infectivity. Alters the functionality of other immunity cells, like dendritic cells, monocytes/macrophages and NK cells. In infected CD4(+) T-lymphocytes, down-regulates the surface MHC-I, mature MHC-II, CD4, CD28, CCR5 and CXCR4 molecules. Mediates internalization and degradation of host CD4 through the interaction of with the cytoplasmic tail of CD4, the recruitment of AP-2 (clathrin adapter protein complex 2), internalization through clathrin coated pits, and subsequent transport to endosomes and lysosomes for degradation. Diverts host MHC-I molecules to the trans-Golgi network-associated endosomal compartments by an endocytic pathway to finally target them for degradation. MHC-I down-regulation may involve AP-1 (clathrin adapter protein complex 1) or possibly Src family kinase-ZAP70/Syk-PI3K cascade recruited by PACS2. In consequence infected cells are masked for immune recognition by cytotoxic T-lymphocytes. Decreasing the number of immune receptors also prevents reinfection by more HIV particles (superinfection). Down-regulates host SERINC3 and SERINC5 thereby excluding these proteins from the viral particles. Virion infectivity is drastically higher when SERINC3 or SERINC5 are excluded from the viral envelope, because these host antiviral proteins impair the membrane fusion event necessary for subsequent virion penetration. Its function is as follows. Bypasses host T-cell signaling by inducing a transcriptional program nearly identical to that of anti-CD3 cell activation. Interaction with TCR-zeta chain up-regulates the Fas ligand (FasL). Increasing surface FasL molecules and decreasing surface MHC-I molecules on infected CD4(+) cells send attacking cytotoxic CD8+ T-lymphocytes into apoptosis. Functionally, plays a role in optimizing the host cell environment for viral replication without causing cell death by apoptosis. Protects the infected cells from apoptosis in order to keep them alive until the next virus generation is ready to strike. Inhibits the Fas and TNFR-mediated death signals by blocking MAP3K5/ASK1. Decreases the half-life of TP53, protecting the infected cell against p53-mediated apoptosis. Inhibits the apoptotic signals regulated by the Bcl-2 family proteins through the formation of a Nef/PI3-kinase/PAK2 complex that leads to activation of PAK2 and induces phosphorylation of host BAD. In terms of biological role, extracellular Nef protein targets CD4(+) T-lymphocytes for apoptosis by interacting with CXCR4 surface receptors. In Simian immunodeficiency virus (isolate CPZ GAB1) (SIV-cpz), this protein is Protein Nef.